A 297-amino-acid chain; its full sequence is uncharacterized protein (297 aa).

The first 24 residues, 1–24, serve as a signal peptide directing secretion; that stretch reads MRAINKFLITVCIALLASVAVALG. Positions 58, 61, 62, 141, 144, 145, 167, 170, 171, 223, 226, 227, 264, 267, and 268 each coordinate heme. A disordered region spans residues 277–297; sequence TNSVDTWSREGEGAEVQQLPH.

In terms of processing, binds 5 heme groups per subunit.

This is an uncharacterized protein from Archaeoglobus fulgidus (strain ATCC 49558 / DSM 4304 / JCM 9628 / NBRC 100126 / VC-16).